The sequence spans 476 residues: MGIKFLEFIKPFCAVLPEIQKPERKIQFREKVLWTAITLFIFLVCCQIPLFGIMSSDSADPFYWMRVILASNRGTLMELGISPIVTSGLIMQLLAGAKIIEVGDTPKDRALFNGAQKLFGMIITIGQAIVYVMTGMYGDPSEMGAGICLLIIIQLFVAGLIVLLLDELLQKGYGLGSGISLFIATNICETIVWKAFSPTTVNTGRGTEFEGAIIALFHLLATRTDKVRALREAFYRQNLPNILNLIATVFVFAVVIYFQGFRVDLPIKSARYRGQYNTYPIKLFYTSNIPIILQSALVSNLYVISQMLSTRFSGNFLVNLLGTWSDATSGGPARAYPVAGLCYYLSPPESFGSVLDDPVHAAIYIVFMLGSCAFFSKTWIEVSGSSAKDVAKQLKEQQMVMRGHRETSMVHELNRYIPTAAAFGGLCIGGLSVMADFLGAIGSGTGILLAVTIIYQYFEIFVKEQSEMGSMGALLF.

Over 2–33 (GIKFLEFIKPFCAVLPEIQKPERKIQFREKVL) the chain is Cytoplasmic. A helical membrane pass occupies residues 34-53 (WTAITLFIFLVCCQIPLFGI). The Lumenal segment spans residues 54–76 (MSSDSADPFYWMRVILASNRGTL). Residues 77–96 (MELGISPIVTSGLIMQLLAG) traverse the membrane as a helical segment. The Cytoplasmic segment spans residues 97 to 117 (AKIIEVGDTPKDRALFNGAQK). The helical transmembrane segment at 118–138 (LFGMIITIGQAIVYVMTGMYG) threads the bilayer. Residues 139-144 (DPSEMG) lie on the Lumenal side of the membrane. The helical transmembrane segment at 145–165 (AGICLLIIIQLFVAGLIVLLL) threads the bilayer. The Cytoplasmic segment spans residues 166–172 (DELLQKG). Residues 173-193 (YGLGSGISLFIATNICETIVW) form a helical membrane-spanning segment. Residues 194-240 (KAFSPTTVNTGRGTEFEGAIIALFHLLATRTDKVRALREAFYRQNLP) are Lumenal-facing. Residues 241–261 (NILNLIATVFVFAVVIYFQGF) traverse the membrane as a helical segment. Topologically, residues 262–288 (RVDLPIKSARYRGQYNTYPIKLFYTSN) are cytoplasmic. Residues 289-309 (IPIILQSALVSNLYVISQMLS) traverse the membrane as a helical segment. Over 310 to 354 (TRFSGNFLVNLLGTWSDATSGGPARAYPVAGLCYYLSPPESFGSV) the chain is Lumenal. The helical transmembrane segment at 355–375 (LDDPVHAAIYIVFMLGSCAFF) threads the bilayer. Over 376 to 420 (SKTWIEVSGSSAKDVAKQLKEQQMVMRGHRETSMVHELNRYIPTA) the chain is Cytoplasmic. Residues 421–441 (AAFGGLCIGGLSVMADFLGAI) form a helical membrane-spanning segment. The Lumenal portion of the chain corresponds to 442 to 445 (GSGT). Residues 446–462 (GILLAVTIIYQYFEIFV) traverse the membrane as a helical segment. Residues 463–476 (KEQSEMGSMGALLF) lie on the Cytoplasmic side of the membrane.

Belongs to the SecY/SEC61-alpha family. As to quaternary structure, the SEC61 channel-forming translocon complex consists of channel-forming core components SEC61A1, SEC61B and SEC61G and different auxiliary components such as SEC62 and SEC63. The SEC61 channel associates with the multi-pass translocon (MPT) complex.

The protein localises to the endoplasmic reticulum membrane. In terms of biological role, component of SEC61 channel-forming translocon complex that mediates transport of signal peptide-containing precursor polypeptides across the endoplasmic reticulum (ER). Forms a ribosome receptor and a gated pore in the ER membrane, both functions required for cotranslational translocation of nascent polypeptides. May cooperate with auxiliary protein SEC62, SEC63 and HSPA5/BiP to enable post-translational transport of small presecretory proteins. The SEC61 channel is also involved in ER membrane insertion of transmembrane proteins: it mediates membrane insertion of the first few transmembrane segments of proteins, while insertion of subsequent transmembrane regions of multi-pass membrane proteins is mediated by the multi-pass translocon (MPT) complex. This is Protein transport protein Sec61 subunit alpha (sec61a) from Notothenia angustata (Rockcod).